Consider the following 437-residue polypeptide: Protein translocase subunit SecY (437 aa).

A run of 10 helical transmembrane segments spans residues 19–39 (LFTL…IPGV), 69–89 (LLQI…SIIL), 122–142 (VALA…GALF), 157–177 (IFTT…VMWL), 189–209 (GMSI…LWAI), 219–239 (WIEF…VVFV), 275–295 (GVIP…IVQF), 318–338 (HIIL…AISF), 378–398 (GSLY…GFGA), and 400–420 (QNFP…LETV).

It belongs to the SecY/SEC61-alpha family. In terms of assembly, component of the Sec protein translocase complex. Heterotrimer consisting of SecY, SecE and SecG subunits. The heterotrimers can form oligomers, although 1 heterotrimer is thought to be able to translocate proteins. Interacts with the ribosome. Interacts with SecDF, and other proteins may be involved. Interacts with SecA.

It is found in the cell membrane. Functionally, the central subunit of the protein translocation channel SecYEG. Consists of two halves formed by TMs 1-5 and 6-10. These two domains form a lateral gate at the front which open onto the bilayer between TMs 2 and 7, and are clamped together by SecE at the back. The channel is closed by both a pore ring composed of hydrophobic SecY resides and a short helix (helix 2A) on the extracellular side of the membrane which forms a plug. The plug probably moves laterally to allow the channel to open. The ring and the pore may move independently. The protein is Protein translocase subunit SecY of Streptomyces coelicolor (strain ATCC BAA-471 / A3(2) / M145).